The chain runs to 1461 residues: Selection and upkeep of intraepithelial T-cells protein 5 (1461 aa).

The signal sequence occupies residues 1–24 (MGAVGIPLTAHCVVLFLLQMVALS). Topologically, residues 25-1306 (SEQFTVNGLE…CNKRNPFWKK (1282 aa)) are extracellular. The 114-residue stretch at 26-139 (EQFTVNGLES…FYEEHIIDVK (114 aa)) folds into the Ig-like V-type domain. 2 disulfide bridges follow: Cys49–Cys123 and Cys163–Cys217. Residues 142 to 231 (ATSSDIQILM…FVTHQEESIS (90 aa)) form the Ig-like C1-type domain. N-linked (GlcNAc...) asparagine glycosylation is present at Asn200. Residues 1307-1327 (YALDLGISVFTIIVVTLIMHL) traverse the membrane as a helical segment. The Cytoplasmic segment spans residues 1328–1345 (KQREADQHFELNTLWSKD). A helical transmembrane segment spans residues 1346–1366 (TSVILCVLIMFNNRLKALIYF). The Extracellular segment spans residues 1367 to 1387 (RLYGFSPPGKAHKYIVNYILR). Residues 1388-1408 (FSHPVFCIVYSATILYMYLQI) traverse the membrane as a helical segment. The Cytoplasmic segment spans residues 1409 to 1427 (QNKDSLFSLYNSWMVEMEM). The helical transmembrane segment at 1428-1448 (VLIFLLVIFNVKNIATVLLYF) threads the bilayer. The Extracellular portion of the chain corresponds to 1449–1461 (DSTTLRLFFWIKG).

This sequence belongs to the SKINT family. In terms of tissue distribution, expressed in skin and, to a lower extent, testis.

The protein resides in the membrane. Functionally, may act by engaging a cell surface molecule on immature T-cells in the embryonic thymus. In Mus musculus (Mouse), this protein is Selection and upkeep of intraepithelial T-cells protein 5 (Skint5).